The chain runs to 388 residues: Carbamoyl phosphate synthase small chain (388 aa).

The CPSase stretch occupies residues 1 to 198 (MSQDLLPGVT…WPEGYAKLDK (198 aa)). The L-glutamine site is built by Ser-53, Gly-250, and Gly-252. Residues 202–388 (EVVVIDYGVK…RFAGLMDAAK (187 aa)) enclose the Glutamine amidotransferase type-1 domain. The active-site Nucleophile is the Cys-279. The L-glutamine site is built by Leu-280, Gln-283, Asn-321, Gly-323, and Phe-324. Catalysis depends on residues His-363 and Glu-365.

It belongs to the CarA family. Composed of two chains; the small (or glutamine) chain promotes the hydrolysis of glutamine to ammonia, which is used by the large (or ammonia) chain to synthesize carbamoyl phosphate. Tetramer of heterodimers (alpha,beta)4.

The catalysed reaction is hydrogencarbonate + L-glutamine + 2 ATP + H2O = carbamoyl phosphate + L-glutamate + 2 ADP + phosphate + 2 H(+). The enzyme catalyses L-glutamine + H2O = L-glutamate + NH4(+). The protein operates within amino-acid biosynthesis; L-arginine biosynthesis; carbamoyl phosphate from bicarbonate: step 1/1. Its pathway is pyrimidine metabolism; UMP biosynthesis via de novo pathway; (S)-dihydroorotate from bicarbonate: step 1/3. Its function is as follows. Small subunit of the glutamine-dependent carbamoyl phosphate synthetase (CPSase). CPSase catalyzes the formation of carbamoyl phosphate from the ammonia moiety of glutamine, carbonate, and phosphate donated by ATP, constituting the first step of 2 biosynthetic pathways, one leading to arginine and/or urea and the other to pyrimidine nucleotides. The small subunit (glutamine amidotransferase) binds and cleaves glutamine to supply the large subunit with the substrate ammonia. The polypeptide is Carbamoyl phosphate synthase small chain (Caulobacter vibrioides (strain ATCC 19089 / CIP 103742 / CB 15) (Caulobacter crescentus)).